The sequence spans 107 residues: Nucleoid-associated protein Daro_0807 (107 aa).

Belongs to the YbaB/EbfC family. Homodimer.

Its subcellular location is the cytoplasm. It localises to the nucleoid. Its function is as follows. Binds to DNA and alters its conformation. May be involved in regulation of gene expression, nucleoid organization and DNA protection. In Dechloromonas aromatica (strain RCB), this protein is Nucleoid-associated protein Daro_0807.